The following is a 333-amino-acid chain: MVNRRNYNYSMINQTCRVRNPARKARARLVLLQTGTWIFVPFPINVPVANIIHVPNTNIFVLTSSMILYFFRRFLFSRSASTSKSIYFASMRFREVLSVCLSPWSLWTRSKALISASPHFSPSSAHSASVFPCPASSATPARPSAPFPPWGAGATQDAVSPSCSASNSITPCRSCTRGRAKRAVRAERQGWLWVEDEKQIAVVGHEWREGAICDAERVKLCYKEKRWVGNIIKQPKWYIKTKNTYTVTPPIRRRSSKRLTTGTRRCRSIQVSLFCDLLSYTAAFRPTRASRTATRGHKKLRFLYGWAYRLLELSRDVYANEQCERVSVRTANQ.

This is an uncharacterized protein from Gallus gallus (Chicken).